Consider the following 264-residue polypeptide: ATP synthase subunit a (264 aa).

The next 6 membrane-spanning stretches (helical) occupy residues 29–49, 90–110, 134–154, 177–197, 208–228, and 235–255; these read TWHI…LWIF, IAPL…MDMI, DVNI…FYSI, IPVN…SLAL, LIFI…TLGV, and LIFH…LTIV.

Belongs to the ATPase A chain family. As to quaternary structure, F-type ATPases have 2 components, CF(1) - the catalytic core - and CF(0) - the membrane proton channel. CF(1) has five subunits: alpha(3), beta(3), gamma(1), delta(1), epsilon(1). CF(0) has three main subunits: a(1), b(2) and c(9-12). The alpha and beta chains form an alternating ring which encloses part of the gamma chain. CF(1) is attached to CF(0) by a central stalk formed by the gamma and epsilon chains, while a peripheral stalk is formed by the delta and b chains.

The protein resides in the cell inner membrane. Functionally, key component of the proton channel; it plays a direct role in the translocation of protons across the membrane. The chain is ATP synthase subunit a from Shewanella baltica (strain OS223).